Here is a 444-residue protein sequence, read N- to C-terminus: Spermidine/putrescine import ATP-binding protein PotA (444 aa).

Residues 11-332 (ISLVDVDKEF…PVNKWVANFI (322 aa)) enclose the ABC transporter domain. ATP is bound at residue 43–50 (GPSGSGKT). Positions 111 to 201 (RIKKKAEEIP…ESFKKKYLTR (91 aa)) are insert.

It belongs to the ABC transporter superfamily. Spermidine/putrescine importer (TC 3.A.1.11.1) family. As to quaternary structure, the complex is composed of two ATP-binding proteins (PotA), two transmembrane proteins (PotB and PotC) and a solute-binding protein (PotD).

Its subcellular location is the cell membrane. The catalysed reaction is ATP + H2O + polyamine-[polyamine-binding protein]Side 1 = ADP + phosphate + polyamineSide 2 + [polyamine-binding protein]Side 1.. Functionally, part of the ABC transporter complex PotABCD involved in spermidine/putrescine import. Responsible for energy coupling to the transport system. The polypeptide is Spermidine/putrescine import ATP-binding protein PotA (Mesomycoplasma hyopneumoniae (strain J / ATCC 25934 / NCTC 10110) (Mycoplasma hyopneumoniae)).